Reading from the N-terminus, the 982-residue chain is MAAPVLYGGAGGTATGPGDMRRSLMHEKKQVFAELRREAQALRVAKEARGKMSVWDPSTREGARGYREKVVRFGRQIASLLQYFENMHSPALDIIACDKFLLKYQIYGDIDRDPAFGENTMTAEVPVVWDKCEVEVKLYAGPLQKLMSRAKLVGAAREGIPNRNDVAKSTGWNQDQVQKFPDNRMDSLISLLEQMQTGQSKLTRLVKGFLILLEMAERKEVDFHVGNHIHVTYAIAPVCDSYDLPGRCYVFNSKPTSEAHAAVLLAMCREYPPPQFASHVSVPADAEDVCIVSQGRQIQPGSAVTLNPGLVYSSILTYAMDTSCTDLLQEAQIIACSLQENRYFSRIGLPTVVSLYDLMVPAFIAQNSALEGARLSGDLSKAVGRVHQMLGMVAAKDIISATHMQSRTGFDPSHGIRQYLNSNSRLVTQMASKLTGIGLFDATPQMRIFSEMDTADYADMLHLTIFEGLWLVQDASVCTDNGPISFLVNGEKLLSADRAGYDVLVEELTLANIRIEHHKMPTGAFTTRWVAAKRDSALRLTPRSRTAHRVDMVRECDFNPTMNLKAAGPKARLRGSGVKSRRRVSEVPLAHVFRSPPRRESTTTTDDSPRWLTREGPQLTRRVPIIDEPPAYESGRSSSPVTSSISEGTSQHEEEMGLFDAEELPMQQTVIATEARRRLGRGTLERIQEAALEGQVAQGEVTAEKNRRIEAMLSARDPQFTGREQITKMLSDGGLGVREREEWLELVDKTVGVKGLKEVRSIDGIRRHLEEYGEREGFAVVRTLLSGNSKHVRRINQLIRESNPSAFETEASRMRRLRADWDGDAGSAPVNALHFVGNSPGWKRWLENNNIPSDIQVAGKKRMCSYLAEVLSHGNLKLSDATKLGRLVEGTSLDLFPPQLSSEEFSTCSEATLAWRNAPSSLGVRPFAQEDSRWLVMAATCGGGSFGIGKLKSLCKEFSVPKELRDALRVKYGLFGGKDSLE.

2 disordered regions span residues 592 to 613 and 628 to 655; these read VFRS…RWLT and EPPA…HEEE. Residues 597–613 show a composition bias toward basic and acidic residues; it reads PRRESTTTTDDSPRWLT. Over residues 635–649 the composition is skewed to polar residues; sequence GRSSSPVTSSISEGT.

Homomultimer.

The protein localises to the virion. Its function is as follows. Capsid protein self-assembles to form an icosahedral capsid with a T=1 symmetry, about 35-40 nm in diameter. This is Capsid protein (p2) from Penicillium chrysogenum virus (isolate Caston/2003) (PcV).